Reading from the N-terminus, the 151-residue chain is Melatonin receptor type 1C (151 aa).

Residues cysteine 1 to arginine 13 lie on the Cytoplasmic side of the membrane. Residues asparagine 14–phenylalanine 34 traverse the membrane as a helical segment. Residues leucine 35–tyrosine 58 lie on the Extracellular side of the membrane. The chain crosses the membrane as a helical span at residues threonine 59–leucine 79. Residues arginine 80–methionine 109 lie on the Cytoplasmic side of the membrane. Residues phenylalanine 110–valine 130 form a helical membrane-spanning segment. The Extracellular portion of the chain corresponds to alanine 131–glutamate 143. A helical transmembrane segment spans residues tryptophan 144–phenylalanine 151.

Belongs to the G-protein coupled receptor 1 family.

It localises to the cell membrane. Functionally, high affinity receptor for melatonin. The activity of this receptor is mediated by pertussis toxin sensitive G proteins that inhibits adenylate cyclase activity. The chain is Melatonin receptor type 1C (mtnr1c) from Danio rerio (Zebrafish).